We begin with the raw amino-acid sequence, 102 residues long: Spexin prohormone 1 (102 aa).

The first 26 residues, 1–26 (MKDLRTLAAYALALLLLATFVSHSWS), serve as a signal peptide directing secretion. A propeptide spanning residues 27-35 (APKGSFQRR) is cleaved from the precursor. Glutamine 49 is modified (glutamine amide). Positions 50 to 102 (GRRFVSEDRNEGDLYDTIRLESRSQNTENLSISKAAAFLLNILQQARDEDEPY) are excised as a propeptide.

The protein belongs to the spexin family. Mainly expressed in the brain and ovary. Detected bilaterally in the adult brainstem. Expressed in neurons in the dorsal habenula (dHb). In the dHb some neurons project into the interpeduncular nucleus (IPN) where expression often overlaps with galr2a and galr2b. Weakly expressed in the liver, intestine, kidney, heart and gill.

It is found in the secreted. The protein resides in the extracellular space. The protein localises to the cytoplasmic vesicle. It localises to the secretory vesicle. Functionally, plays a role in the regulation of food intake and energy metabolism. May also be involved in suppressing the anxiety response by promoting the expression of serotonin-related genes such as fev, tph2 and slc6a4a. Its function is as follows. Acts as a ligand for galanin receptors galr2a and galr2b. Brain administration of the peptide inhibits food consumption and elevates levels of glucose, triacylglycerol and cholesterol in the serum. Likely to control food intake by regulating appetite related genes which includes the negative regulation of the orexigenic factor agrp. By controlling food intake it may act as a satiety factor in energy metabolism. The protein is Spexin prohormone 1 (spx) of Danio rerio (Zebrafish).